Reading from the N-terminus, the 49-residue chain is Large ribosomal subunit protein bL33 (49 aa).

The protein belongs to the bacterial ribosomal protein bL33 family.

The protein is Large ribosomal subunit protein bL33 of Clostridium acetobutylicum (strain ATCC 824 / DSM 792 / JCM 1419 / IAM 19013 / LMG 5710 / NBRC 13948 / NRRL B-527 / VKM B-1787 / 2291 / W).